The following is a 138-amino-acid chain: Large ribosomal subunit protein uL16 (138 aa).

The protein belongs to the universal ribosomal protein uL16 family. In terms of assembly, part of the 50S ribosomal subunit.

In terms of biological role, binds 23S rRNA and is also seen to make contacts with the A and possibly P site tRNAs. The sequence is that of Large ribosomal subunit protein uL16 from Ureaplasma parvum serovar 3 (strain ATCC 27815 / 27 / NCTC 11736).